An 888-amino-acid chain; its full sequence is ETO1-like protein 1 (888 aa).

Residues 180 to 280 (KNVVFKIGEE…ACDRELASLI (101 aa)) form the BTB domain. 5 TPR repeats span residues 381-414 (VLGF…GHVY), 441-477 (SSVS…DPTL), 511-544 (LECL…CPDY), 637-670 (HERL…KRSF), and 711-744 (GQAL…RHTR). Positions 755 to 793 (LRNDKAAAYEEMTRLIEKAQNNASAYEKRSEYCDRELAK) form a coiled coil. 2 TPR repeats span residues 807–840 (VYPY…KADL) and 842–873 (LLHL…DPNH).

Belongs to the ETO1 family. Interacts with the C-terminal domain of ACS4, ACS5 and ACS9. Predominantly expressed in flowers.

Its pathway is protein modification; protein ubiquitination. Functionally, possible regulator of the ethylene pathway, which acts by regulating the stability of 1-aminocyclopropane-1-carboxylate synthase (ACS) enzymes. May act as a substrate-specific adapter that connects ACS enzymes, such as ACS5, to ubiquitin ligase complexes, leading to proteasomal degradation of ACS enzymes. This Arabidopsis thaliana (Mouse-ear cress) protein is ETO1-like protein 1 (EOL1).